We begin with the raw amino-acid sequence, 843 residues long: Glycogen phosphorylase, brain form (843 aa).

At A2 the chain carries N-acetylalanine. The residue at position 15 (S15) is a Phosphoserine; by PHK; in form phosphorylase A. Residues D43, Y197, and R310 each coordinate AMP. Y197 carries the phosphotyrosine modification. Y473 is modified (phosphotyrosine). K569 is a binding site for pyridoxal 5'-phosphate. The segment at 677-678 (TG) is pyridoxal 5'-phosphate. At K681 the chain carries N6-(pyridoxal phosphate)lysine.

Belongs to the glycogen phosphorylase family. As to quaternary structure, homodimer. Dimers associate into a tetramer to form the enzymatically active phosphorylase A. Pyridoxal 5'-phosphate serves as cofactor. Post-translationally, phosphorylation of Ser-15 converts phosphorylase B (unphosphorylated) to phosphorylase A.

The catalysed reaction is [(1-&gt;4)-alpha-D-glucosyl](n) + phosphate = [(1-&gt;4)-alpha-D-glucosyl](n-1) + alpha-D-glucose 1-phosphate. Its activity is regulated as follows. Activity of phosphorylase is controlled both by allosteric means (through the non-covalent binding of metabolites) and by covalent modification. Thus AMP allosterically activates, whereas ATP, ADP, and glucose-6-phosphate allosterically inhibit, phosphorylase B. Its function is as follows. Glycogen phosphorylase that regulates glycogen mobilization. Phosphorylase is an important allosteric enzyme in carbohydrate metabolism. Enzymes from different sources differ in their regulatory mechanisms and in their natural substrates. However, all known phosphorylases share catalytic and structural properties. In Pongo abelii (Sumatran orangutan), this protein is Glycogen phosphorylase, brain form (PYGB).